A 558-amino-acid chain; its full sequence is Urocanate hydratase (558 aa).

NAD(+) is bound by residues 53–54 (GG), Gln-131, 177–179 (GMG), Glu-197, Arg-202, 243–244 (NA), 264–268 (QTSAH), 274–275 (YL), and Tyr-323. Residue Cys-411 is part of the active site. Residue Gly-493 participates in NAD(+) binding.

This sequence belongs to the urocanase family. Requires NAD(+) as cofactor.

The protein localises to the cytoplasm. It catalyses the reaction 4-imidazolone-5-propanoate = trans-urocanate + H2O. It participates in amino-acid degradation; L-histidine degradation into L-glutamate; N-formimidoyl-L-glutamate from L-histidine: step 2/3. Its function is as follows. Catalyzes the conversion of urocanate to 4-imidazolone-5-propionate. The sequence is that of Urocanate hydratase from Idiomarina loihiensis (strain ATCC BAA-735 / DSM 15497 / L2-TR).